The primary structure comprises 384 residues: GTPase Obg (384 aa).

Residues 1-159 enclose the Obg domain; it reads MKFIDEAKIE…RSLQLELKVL (159 aa). 2 disordered regions span residues 20–46 and 129–149; these read ATSF…GSVW and HFKS…EGET. Positions 33 to 43 are enriched in gly residues; sequence GPDGGDGGKGG. Positions 130–143 are enriched in polar residues; the sequence is FKSSVNRAPKQSTP. The OBG-type G domain maps to 160–348; the sequence is ADVGLLGMPN…LVHQINQYLA (189 aa). GTP is bound by residues 166–173, 191–195, 213–216, 284–287, and 329–331; these read GMPNAGKS, FTTLH, DIPG, NKLD, and SAL. Mg(2+) is bound by residues Ser173 and Thr193.

It belongs to the TRAFAC class OBG-HflX-like GTPase superfamily. OBG GTPase family. Monomer. Requires Mg(2+) as cofactor.

It is found in the cytoplasm. An essential GTPase which binds GTP, GDP and possibly (p)ppGpp with moderate affinity, with high nucleotide exchange rates and a fairly low GTP hydrolysis rate; the half-life of the GTP-bound state is about 50 minutes. Plays a role in control of the cell cycle, stress response, ribosome biogenesis and in those bacteria that undergo differentiation, in morphogenesis control. In Neisseria gonorrhoeae (strain ATCC 700825 / FA 1090), this protein is GTPase Obg.